Reading from the N-terminus, the 279-residue chain is Protein phosphatase 1 regulatory subunit 3E (279 aa).

A phosphoserine mark is found at Ser-16 and Ser-33. The interval 28 to 86 is disordered; sequence RSQRPSLEEEPEEEPGEGGTRFGARSRAHAPSRGRRARSAPAGGGGARAPRSRSPDTRK. Over residues 51–65 the composition is skewed to basic residues; the sequence is ARSRAHAPSRGRRAR. Ser-66 carries the phosphoserine modification. Residues 87–90 carry the PP1-binding motif motif; that stretch reads RVRF. Residues 154–259 form the CBM21 domain; it reads AARLLTQRIC…NNGGRDYALR (106 aa). Residues 176–198 are glycogen-binding motif; it reads GSARVVDLAYEKRVSVRWSADGW. The segment at 248 to 256 is substrate-binding motif; the sequence is WDNNGGRDY.

As to expression, expressed in skeletal muscle and heart with barely detectable levels in liver.

Functionally, acts as a glycogen-targeting subunit for PP1. PP1 is involved in glycogen metabolism and contributes to the activation of glycogen synthase leading to an increase in glycogen synthesis. This Homo sapiens (Human) protein is Protein phosphatase 1 regulatory subunit 3E (PPP1R3E).